The following is a 115-amino-acid chain: Large ribosomal subunit protein uL18 (115 aa).

It belongs to the universal ribosomal protein uL18 family. As to quaternary structure, part of the 50S ribosomal subunit; part of the 5S rRNA/L5/L18/L25 subcomplex. Contacts the 5S and 23S rRNAs.

Its function is as follows. This is one of the proteins that bind and probably mediate the attachment of the 5S RNA into the large ribosomal subunit, where it forms part of the central protuberance. This Marinobacter nauticus (strain ATCC 700491 / DSM 11845 / VT8) (Marinobacter aquaeolei) protein is Large ribosomal subunit protein uL18.